The primary structure comprises 370 residues: Chorismate synthase (370 aa).

The disordered stretch occupies residues 41 to 60 (IQGDLDRRKPGTSRHVTQRK). Residues Arg48 and Arg54 each coordinate NADP(+). Residues 125–127 (RSS), 238–239 (NA), Gly278, 293–297 (KPTSS), and Arg319 contribute to the FMN site.

This sequence belongs to the chorismate synthase family. Homotetramer. It depends on FMNH2 as a cofactor.

The catalysed reaction is 5-O-(1-carboxyvinyl)-3-phosphoshikimate = chorismate + phosphate. Its pathway is metabolic intermediate biosynthesis; chorismate biosynthesis; chorismate from D-erythrose 4-phosphate and phosphoenolpyruvate: step 7/7. Catalyzes the anti-1,4-elimination of the C-3 phosphate and the C-6 proR hydrogen from 5-enolpyruvylshikimate-3-phosphate (EPSP) to yield chorismate, which is the branch point compound that serves as the starting substrate for the three terminal pathways of aromatic amino acid biosynthesis. This reaction introduces a second double bond into the aromatic ring system. The protein is Chorismate synthase of Cupriavidus pinatubonensis (strain JMP 134 / LMG 1197) (Cupriavidus necator (strain JMP 134)).